A 29-amino-acid chain; its full sequence is Galanin (29 aa).

The residue at position 29 (alanine 29) is an Alanine amide.

This sequence belongs to the galanin family.

It is found in the secreted. In terms of biological role, contracts smooth muscle of the gastrointestinal and genitourinary tract, regulates growth hormone release, modulates insulin release, and may be involved in the control of adrenal secretion. This Amia calva (Bowfin) protein is Galanin (gal).